Reading from the N-terminus, the 115-residue chain is Macrophage migration inhibitory factor homolog (115 aa).

The active-site Proton acceptor; via imino nitrogen is the P2. 2 residues coordinate substrate: K33 and I65.

Belongs to the MIF family.

The protein resides in the secreted. The enzyme catalyses L-dopachrome = 5,6-dihydroxyindole-2-carboxylate. It catalyses the reaction 3-phenylpyruvate = enol-phenylpyruvate. Functionally, tautomerization of the methyl ester of L-dopachrome. Inhibits migration of human peripheral blood mononuclear cells. The polypeptide is Macrophage migration inhibitory factor homolog (Brugia malayi (Filarial nematode worm)).